Reading from the N-terminus, the 195-residue chain is Imidazoleglycerol-phosphate dehydratase (195 aa).

Belongs to the imidazoleglycerol-phosphate dehydratase family.

It localises to the cytoplasm. It carries out the reaction D-erythro-1-(imidazol-4-yl)glycerol 3-phosphate = 3-(imidazol-4-yl)-2-oxopropyl phosphate + H2O. The protein operates within amino-acid biosynthesis; L-histidine biosynthesis; L-histidine from 5-phospho-alpha-D-ribose 1-diphosphate: step 6/9. The chain is Imidazoleglycerol-phosphate dehydratase from Geobacter sulfurreducens (strain ATCC 51573 / DSM 12127 / PCA).